The following is a 247-amino-acid chain: Uridylate kinase (247 aa).

An ATP-binding site is contributed by 18 to 21 (KLSG). Glycine 60 contributes to the UMP binding site. Residues glycine 61 and arginine 65 each coordinate ATP. UMP is bound by residues aspartate 80 and 141–148 (TGNPFFTT). Threonine 168, tyrosine 174, and aspartate 177 together coordinate ATP.

The protein belongs to the UMP kinase family. As to quaternary structure, homohexamer.

The protein localises to the cytoplasm. The enzyme catalyses UMP + ATP = UDP + ADP. It participates in pyrimidine metabolism; CTP biosynthesis via de novo pathway; UDP from UMP (UMPK route): step 1/1. Inhibited by UTP. Catalyzes the reversible phosphorylation of UMP to UDP. This is Uridylate kinase from Pseudomonas putida (strain ATCC 47054 / DSM 6125 / CFBP 8728 / NCIMB 11950 / KT2440).